We begin with the raw amino-acid sequence, 598 residues long: Phenylalanine--tRNA ligase beta subunit, cytoplasmic (598 aa).

Residues 303-383 (LAVYDMEVPL…IAYGFNNIPT (81 aa)) enclose the B5 domain. Mg(2+) is bound by residues Asp361, Asp367, Glu370, and Asp371.

The protein belongs to the phenylalanyl-tRNA synthetase beta subunit family. Type 2 subfamily. As to quaternary structure, tetramer of two alpha and two beta subunits. Mg(2+) serves as cofactor.

It is found in the cytoplasm. The protein localises to the cytosol. The catalysed reaction is tRNA(Phe) + L-phenylalanine + ATP = L-phenylalanyl-tRNA(Phe) + AMP + diphosphate + H(+). This is Phenylalanine--tRNA ligase beta subunit, cytoplasmic from Arabidopsis thaliana (Mouse-ear cress).